Consider the following 596-residue polypeptide: uncharacterized protein (596 aa).

Composition is skewed to basic residues over residues 1 to 10 and 18 to 29; these read MRLRSQKRGN and KTRKGKGKKLKP. The interval 1-30 is disordered; sequence MRLRSQKRGNKFVALPAKTRKGKGKKLKPK.

This is an uncharacterized protein from Magallana gigas (Pacific oyster).